A 333-amino-acid polypeptide reads, in one-letter code: Foldase protein PrsA (333 aa).

An N-terminal signal peptide occupies residues 1–19 (MKKRHLLIAGLACMTILGA). Cys-20 carries the N-palmitoyl cysteine lipid modification. A lipid anchor (S-diacylglycerol cysteine) is attached at Cys-20. The 91-residue stretch at 155-245 (LIEVEASHIL…YGYHIILVTD (91 aa)) folds into the PpiC domain. The segment at 291–333 (GLFDLPDAPPVEDTPEIDGEDASDEAEDQAEDADENAEEEDES) is disordered. The segment covering 303 to 333 (DTPEIDGEDASDEAEDQAEDADENAEEEDES) has biased composition (acidic residues).

It belongs to the PrsA family.

It localises to the cell membrane. It catalyses the reaction [protein]-peptidylproline (omega=180) = [protein]-peptidylproline (omega=0). In terms of biological role, plays a major role in protein secretion by helping the post-translocational extracellular folding of several secreted proteins. The sequence is that of Foldase protein PrsA from Halalkalibacterium halodurans (strain ATCC BAA-125 / DSM 18197 / FERM 7344 / JCM 9153 / C-125) (Bacillus halodurans).